Consider the following 170-residue polypeptide: Ureidoglycolate lyase 1 (170 aa).

Belongs to the ureidoglycolate lyase family. As to quaternary structure, homodimer. It depends on Ni(2+) as a cofactor.

The enzyme catalyses (S)-ureidoglycolate = urea + glyoxylate. It functions in the pathway nitrogen metabolism; (S)-allantoin degradation. Catalyzes the catabolism of the allantoin degradation intermediate (S)-ureidoglycolate, generating urea and glyoxylate. Involved in the utilization of allantoin as nitrogen source. The protein is Ureidoglycolate lyase 1 of Rhizobium meliloti (strain 1021) (Ensifer meliloti).